The primary structure comprises 371 residues: Protein arginine N-methyltransferase 1 (371 aa).

The 312-residue stretch at Lys-50–Glu-361 folds into the SAM-dependent MTase PRMT-type domain. S-adenosyl-L-methionine contacts are provided by His-63, Arg-72, Gly-96, and Glu-118. Arg-72 lines the S-adenosyl-L-homocysteine pocket. Glu-118 provides a ligand contact to S-adenosyl-L-homocysteine. N6-succinyllysine is present on Lys-134. A Glycyl lysine isopeptide (Lys-Gly) (interchain with G-Cter in ubiquitin) cross-link involves residue Lys-145. S-adenosyl-L-homocysteine contacts are provided by Val-146 and Glu-147. Position 147 (Glu-147) interacts with S-adenosyl-L-methionine. Active-site residues include Glu-162 and Glu-171. An N6-acetyllysine mark is found at Lys-228 and Lys-233. 2 positions are modified to phosphoserine: Ser-304 and Ser-307.

Belongs to the class I-like SAM-binding methyltransferase superfamily. Protein arginine N-methyltransferase family. In terms of assembly, homodimer. Homooctamer; individual homodimers associates to form a homooctamer. Individual homodimers can associate to form a homohexamer. Heterodimer with PRMT8. Interacts with BTG1, BTG2, NFATC2IP and IFNAR1. Interacts with and methylates CHTOP, thereby enabling the interaction of CHTOP with the 5FMC complex. Interacts with ILF3 and SUPT5H. Interacts with and methylates FOXO1, leading to the nuclear retention of FOXO1 and the stimulation of FOXO1 transcriptional activity. Methylation of FOXO1 is increased upon oxidative stress. Interacts with and probably methylates ATXN2L. Component of the methylosome, a 20S complex containing at least CLNS1A/pICln, PRMT5/SKB1, WDR77/MEP50, PRMT1 and ERH. Interacts with DHX9 (via RGG region). Interacts (via N-terminus) with HABP4. Interacts with MAP3K5/ASK1; the interaction results in MAP3K5 methylation by PRMT1 which inhibits MAP3K5 activation. Interacts with TRIM48; the interaction results in ubiquitination of PRMT1 by TRIM48, leading to PRMT1 proteasomal degradation and activation of MAP3K5. Interacts with GATOR1 complex; this interaction is S-adenosyl-L-methionine (SAM) dependent and is perturbated by SAMTOR in a SAM-sensitive manner. Interacts with GFI1; promoting recognition and binding of MRE11 and TP53BP1 substrates by PRMT1. Polyubiquitinated at Lys-145 by the SCF(FBXL17) complex, leading to its subsequent degradation. Ubiquitination is regulated by acetylation at Lys-228 and Lys-233. Polyubiquitinated by E3 ubiquitin-protein ligase TRIM48, leading to suppression of MAP3K5/ASK1 methylation and subsequent MAP3K5 activation. Post-translationally, acetylation at Lys-228 and Lys-233 regulates ubiquitination by the SCF(FBXL17) complex. Acetylated at Lys-233 by p300/EP300. Deacetylated at Lys-228 and Lys-233 by SIRT1. Widely expressed. Expressed strongly in colorectal cancer cells (at protein level). Expressed strongly in colorectal cancer tissues compared to wild-type colon samples (at protein level). Expressed strongly in colorectal cancer tissues compared to wild-type colon samples.

It is found in the nucleus. The protein resides in the nucleoplasm. Its subcellular location is the cytoplasm. The protein localises to the cytosol. It localises to the lysosome membrane. It catalyses the reaction L-arginyl-[protein] + 2 S-adenosyl-L-methionine = N(omega),N(omega)-dimethyl-L-arginyl-[protein] + 2 S-adenosyl-L-homocysteine + 2 H(+). The catalysed reaction is L-arginyl-[protein] + S-adenosyl-L-methionine = N(omega)-methyl-L-arginyl-[protein] + S-adenosyl-L-homocysteine + H(+). The enzyme catalyses N(omega)-methyl-L-arginyl-[protein] + S-adenosyl-L-methionine = N(omega),N(omega)-dimethyl-L-arginyl-[protein] + S-adenosyl-L-homocysteine + H(+). Its function is as follows. Arginine methyltransferase that methylates (mono and asymmetric dimethylation) the guanidino nitrogens of arginyl residues present in proteins such as ESR1, histone H2, H3 and H4, FMR1, ILF3, HNRNPA1, HNRNPD, NFATC2IP, SUPT5H, TAF15, EWS, HABP4, SERBP1, RBM15, FOXO1, CHTOP, MAP3K5/ASK1, MICU1 and NPRL2. Constitutes the main enzyme that mediates monomethylation and asymmetric dimethylation of histone H4 'Arg-3' (H4R3me1 and H4R3me2a, respectively), a specific tag for epigenetic transcriptional activation. May be involved in the regulation of TAF15 transcriptional activity, act as an activator of estrogen receptor (ER)-mediated transactivation, play a key role in neurite outgrowth and act as a negative regulator of megakaryocytic differentiation, by modulating p38 MAPK pathway. Methylates RBM15, promoting ubiquitination and degradation of RBM15. Methylates MRE11 and TP53BP1, promoting the DNA damage response. Methylates FOXO1 and retains it in the nucleus increasing its transcriptional activity. Methylates CHTOP and this methylation is critical for its 5-hydroxymethylcytosine (5hmC)-binding activity. Methylates MAP3K5/ASK1 at 'Arg-78' and 'Arg-80' which promotes association of MAP3K5 with thioredoxin and negatively regulates MAP3K5 association with TRAF2, inhibiting MAP3K5 stimulation and MAP3K5-induced activation of JNK. Methylates H4R3 in genes involved in glioblastomagenesis in a CHTOP- and/or TET1-dependent manner. Plays a role in regulating alternative splicing in the heart. Methylates NPRL2 at 'Arg-78' leading to inhibition of its GTPase activator activity and then the GATOR1 complex and consequently inducing timely mTORC1 activation under methionine-sufficient conditions. The sequence is that of Protein arginine N-methyltransferase 1 from Homo sapiens (Human).